The sequence spans 262 residues: Tetrahydromethanopterin S-methyltransferase subunit C (262 aa).

6 helical membrane-spanning segments follow: residues 35–57 (FVPSLAMLIGGLLAAGACVAGAN), 70–92 (GVPSIGMVSLGMGTISALAGVLI), 97–119 (GLPVLATPILAAVIAVVVGFIVG), 140–162 (LSLMGALAILGFCTAFAGGFSAD), 172–194 (GVIALAFIAAGMSILHPFNACIG), and 214–236 (WLIFSIAKLDIVSIVVAAIFWLY).

This sequence belongs to the MtrC family. As to quaternary structure, the complex is composed of 8 subunits; MtrA, MtrB, MtrC, MtrD, MtrE, MtrF, MtrG and MtrH.

It is found in the cell membrane. The enzyme catalyses 5-methyl-5,6,7,8-tetrahydromethanopterin + coenzyme M + 2 Na(+)(in) = 5,6,7,8-tetrahydromethanopterin + methyl-coenzyme M + 2 Na(+)(out). It participates in one-carbon metabolism; methanogenesis from CO(2); methyl-coenzyme M from 5,10-methylene-5,6,7,8-tetrahydromethanopterin: step 2/2. Part of a complex that catalyzes the formation of methyl-coenzyme M and tetrahydromethanopterin from coenzyme M and methyl-tetrahydromethanopterin. This is an energy-conserving, sodium-ion translocating step. The polypeptide is Tetrahydromethanopterin S-methyltransferase subunit C (Methanococcus maripaludis (strain DSM 14266 / JCM 13030 / NBRC 101832 / S2 / LL)).